We begin with the raw amino-acid sequence, 568 residues long: Natural resistance-associated macrophage protein 2 (568 aa).

The segment covering 1–20 (MVLDPEEKIPDDGASGDHGD) has biased composition (basic and acidic residues). The tract at residues 1–45 (MVLDPEEKIPDDGASGDHGDSASLGAINPAYSNSSLPHSTGDSEE) is disordered. The Cytoplasmic portion of the chain corresponds to 1-69 (MVLDPEEKIP…EEYSCFSFRK (69 aa)). Polar residues predominate over residues 30–40 (AYSNSSLPHST). A helical transmembrane segment spans residues 70-90 (LWAFTGPGFLMSIAYLDPGNI). Residues 91–95 (ESDLQ) are Extracellular-facing. A helical transmembrane segment spans residues 96–117 (SGAVAGFKLLWVLLLATIVGLL). Over 118–154 (LQRLAARLGVVTGLHLAEVCHRQYPKVPRIILWLMVE) the chain is Cytoplasmic. The helical transmembrane segment at 155-175 (LAIIGSDMQEVIGSAIAINLL) threads the bilayer. The Extracellular portion of the chain corresponds to 176–179 (SAGR). Residues 180-194 (VPLYGGVLITIADTF) form a helical membrane-spanning segment. Topologically, residues 195-208 (VFLFLDKYGLRKLE) are cytoplasmic. Residues 209-229 (AFFGFLITIMALTFGYEYVTV) traverse the membrane as a helical segment. At 230–255 (KPSQSQVLRGMFVPSCSGCHTPQVEQ) the chain is on the extracellular side. A helical membrane pass occupies residues 256–276 (AVGIVGAVIMPHNMYLHSALV). The Cytoplasmic portion of the chain corresponds to 277-301 (KSRQVNRANKQEVREANKYFFIESC). The helical transmembrane segment at 302 to 322 (IALFVSFIINVFVVSVFAEAF) threads the bilayer. Residues 323–360 (FEKTNEQVVEVCRNSSSPHADLFPNDNSTLAVDIYKGG) lie on the Extracellular side of the membrane. 2 N-linked (GlcNAc...) asparagine glycosylation sites follow: N336 and N349. Residues 361–381 (VVLGCYFGPAALYIWAVGILA) traverse the membrane as a helical segment. Residues 382–408 (AGQSSTMTGTYSGQFVMEGFLNLKWSR) are Cytoplasmic-facing. The helical transmembrane segment at 409 to 429 (FARVILTRSIAIIPTLLVAVF) threads the bilayer. At 430 to 440 (QDVEHLTGMND) the chain is on the extracellular side. The chain crosses the membrane as a helical span at residues 441–461 (FLNVLQSLQLPFALIPILTFT). Topologically, residues 462-482 (SLRPVMSEFSNGIGWRIAGGI) are cytoplasmic. The chain crosses the membrane as a helical span at residues 483–503 (LVLLVCSINMYFVVVYVQELG). Residues 504 to 506 (HVA) lie on the Extracellular side of the membrane. The helical transmembrane segment at 507 to 527 (LYVVAAVVSVAYLGFVFYLGW) threads the bilayer. At 528–568 (QCLIALGLSFLDCGRSYHLGLTARPEIYLLNTVDAVSLVSR) the chain is on the cytoplasmic side. The required for early endosome targeting stretch occupies residues 555–559 (YLLNT). L556, S564, and S567 each carry phosphoserine.

Belongs to the NRAMP family. As to quaternary structure, forms a complex with NDFIP1 and NEDD4L, in cortical neurons, in response to iron and cobalt exposure; this interaction leads to SLC11A2 ubiquitination by NEDD4L and proteasome-dependent degradation. Interacts with NDFIP1, NDFIP2 and WWP2; this interaction leads to SLC11A2 ubiquitination by WWP2 and subsequent proteasome-dependent degradation. Interacts with COX2 and TOM6 at the outer mitochondrion membrane. Interacts with ARRDC1; this interaction regulates the incorporation of SLC11A2 into extracellular vesicles through an ubiquitination-dependent mechanism. Interacts with ARRDC4; controls the incorporation of SLC11A2 into extracellular vesicles through an ubiquitination-dependent mechanism. In terms of processing, ubiquitinated by WWP2. Post-translationally, N-glycosylated. As to expression, ubiquitous. Expressed in proximal intestine, kidney and brain.

The protein resides in the golgi apparatus. The protein localises to the trans-Golgi network membrane. Its subcellular location is the early endosome membrane. It is found in the recycling endosome membrane. It localises to the late endosome membrane. The protein resides in the lysosome membrane. The protein localises to the apical cell membrane. Its subcellular location is the mitochondrion outer membrane. It is found in the extracellular vesicle membrane. The catalysed reaction is Fe(2+)(in) + H(+)(in) = Fe(2+)(out) + H(+)(out). It carries out the reaction Cd(2+)(out) + H(+)(out) = Cd(2+)(in) + H(+)(in). The enzyme catalyses Co(2+)(out) + H(+)(out) = Co(2+)(in) + H(+)(in). It catalyses the reaction Mn(2+)(in) + H(+)(in) = Mn(2+)(out) + H(+)(out). The catalysed reaction is Zn(2+)(out) + H(+)(out) = Zn(2+)(in) + H(+)(in). It carries out the reaction Ni(2+)(out) + H(+)(out) = Ni(2+)(in) + H(+)(in). The enzyme catalyses H(+)(in) = H(+)(out). It catalyses the reaction Fe(2+)(in) = Fe(2+)(out). Its activity is regulated as follows. Inhibited by 2-(3-carbamimidoylsulfanylmethyl-benzyl)-isothiourea. In terms of biological role, proton-coupled metal ion symporter operating with a proton to metal ion stoichiometry of 1:1. Selectively transports various divalent metal cations, in decreasing affinity: Cd(2+) &gt; Fe(2+) &gt; Co(2+), Mn(2+) &gt;&gt; Zn(2+), Ni(2+), VO(2+). Essential for maintenance of iron homeostasis by modulating intestinal absorption of dietary Fe(2+) and TF-associated endosomal Fe(2+) transport in erythroid precursors and other cells. Enables Fe(2+) and Mn(2+) ion entry into mitochondria, and is thus expected to promote mitochondrial heme synthesis, iron-sulfur cluster biogenesis and antioxidant defense. Can mediate uncoupled fluxes of either protons or metal ions. In Rattus norvegicus (Rat), this protein is Natural resistance-associated macrophage protein 2 (Slc11a2).